Reading from the N-terminus, the 404-residue chain is Spore development regulator RYP2 (404 aa).

3 disordered regions span residues 1 to 46 (MSAP…RKAV), 200 to 231 (LLKR…SSQQ), and 382 to 404 (SGQS…PAWG). The 178-residue stretch at 17–194 (LQSADFRLTV…ADQGVKLRIR (178 aa)) folds into the Velvet domain. Over residues 29–46 (NPERARVAGGKEKERKAV) the composition is skewed to basic and acidic residues. Residues 382-397 (SGQSFSQSAGHMQSPS) show a composition bias toward polar residues.

It belongs to the velvet family. VosA subfamily. Forms a heterodimeric complex with RYP3; the formation of the RYP2-RYP3 complex is light-dependent.

The protein resides in the nucleus. Component of the RYP2-RYP3 heterodimeric complex that plays a dual role in activating genes associated with spore maturation and repressing certain development-associated genes. The complex binds DNA through the DNA-binding domain of vosA that recognizes an 11-nucleotide consensus sequence 5'-CTGGCCGCGGC-3' consisting of two motifs in the promoters of key developmental regulatory genes. Required for viable spore production and regulation of sporulation in response to temperature and for the switch to yeast-form in the presence of host cells. This is Spore development regulator RYP2 from Ajellomyces capsulatus (Darling's disease fungus).